The primary structure comprises 70 residues: DNA gyrase inhibitor YacG (70 aa).

4 residues coordinate Zn(2+): Cys-20, Cys-23, Cys-35, and Cys-39.

It belongs to the DNA gyrase inhibitor YacG family. Interacts with GyrB. It depends on Zn(2+) as a cofactor.

In terms of biological role, inhibits all the catalytic activities of DNA gyrase by preventing its interaction with DNA. Acts by binding directly to the C-terminal domain of GyrB, which probably disrupts DNA binding by the gyrase. In Rhizobium leguminosarum bv. trifolii (strain WSM2304), this protein is DNA gyrase inhibitor YacG.